Here is a 496-residue protein sequence, read N- to C-terminus: Alpha-amylase (496 aa).

The cysteines at positions 29 and 85 are disulfide-linked. Residues Asn-99, Arg-155, and Asp-164 each contribute to the Ca(2+) site. Residue Arg-192 participates in chloride binding. Asp-194 (nucleophile) is an active-site residue. His-198 serves as a coordination point for Ca(2+). Catalysis depends on Glu-230, which acts as the Proton donor. Arg-332 serves as a coordination point for chloride. 2 disulfide bridges follow: Cys-374/Cys-380 and Cys-448/Cys-460.

This sequence belongs to the glycosyl hydrolase 13 family. As to quaternary structure, monomer. Ca(2+) serves as cofactor. It depends on chloride as a cofactor. Post-translationally, disulfide bonds are present.

It is found in the secreted. It carries out the reaction Endohydrolysis of (1-&gt;4)-alpha-D-glucosidic linkages in polysaccharides containing three or more (1-&gt;4)-alpha-linked D-glucose units.. Inhibited by alpha-amylase inhibitors from wheat and rye. The most effective inhibitors are the wheat tetrameric alpha-amylase inhibitor (WTAI) and the rye dimeric alpha-amylase inhibitor (RDAI-1). Not inhibited by alpha-amylase inhibitor from barley. In terms of biological role, aids in the digestion of starch and glycogen derived from food, such as skin scales, fungi and bacteria. The protein is Alpha-amylase of Dermatophagoides pteronyssinus (European house dust mite).